We begin with the raw amino-acid sequence, 670 residues long: UvrABC system protein B (670 aa).

Residues 25–412 form the Helicase ATP-binding domain; it reads EGLEAGLSHQ…AGRVIEQVVR (388 aa). 38-45 is a binding site for ATP; it reads GVTGSGKT. A Beta-hairpin motif is present at residues 91–114; the sequence is YYDYYQPEAYVPSSDTYIEKDSSI. The region spanning 429 to 582 is the Helicase C-terminal domain; sequence QVDDLLSQIR…QIAFNEAHGI (154 aa). Positions 631–666 constitute a UVR domain; sequence SKRIRQLEEKMYQLARDLEFEAAAQLRDEIQTLRER.

The protein belongs to the UvrB family. In terms of assembly, forms a heterotetramer with UvrA during the search for lesions. Interacts with UvrC in an incision complex.

It localises to the cytoplasm. Functionally, the UvrABC repair system catalyzes the recognition and processing of DNA lesions. A damage recognition complex composed of 2 UvrA and 2 UvrB subunits scans DNA for abnormalities. Upon binding of the UvrA(2)B(2) complex to a putative damaged site, the DNA wraps around one UvrB monomer. DNA wrap is dependent on ATP binding by UvrB and probably causes local melting of the DNA helix, facilitating insertion of UvrB beta-hairpin between the DNA strands. Then UvrB probes one DNA strand for the presence of a lesion. If a lesion is found the UvrA subunits dissociate and the UvrB-DNA preincision complex is formed. This complex is subsequently bound by UvrC and the second UvrB is released. If no lesion is found, the DNA wraps around the other UvrB subunit that will check the other stand for damage. This chain is UvrABC system protein B, found in Pseudomonas aeruginosa (strain ATCC 15692 / DSM 22644 / CIP 104116 / JCM 14847 / LMG 12228 / 1C / PRS 101 / PAO1).